The chain runs to 243 residues: Ornithine decarboxylase antizyme 3 (243 aa).

Phosphoserine occurs at positions 6, 9, and 12.

This sequence belongs to the ODC antizyme family. As to quaternary structure, interacts with ODC1 and thereby sterically blocks ODC homodimerization. Interacts with AZIN2; this interaction disrupts the interaction between the antizyme and ODC1. Interacts with GGN. In terms of tissue distribution, testis specific. Expressed throughout the differentiation process from spermatids to spermatozoa in the inner part of the seminiferous tubules.

It localises to the nucleus. The protein resides in the cytoplasm. Functionally, ornithine decarboxylase (ODC) antizyme protein that negatively regulates ODC activity and intracellular polyamine biosynthesis and uptake in response to increased intracellular polyamine levels. Binds to ODC monomers, inhibiting the assembly of the functional ODC homodimers. Does not target the ODC monomers for degradation, which allows a protein synthesis-independent restoration of ODC activity. Stabilizes AZIN2 by interfering with its ubiquitination. Involved in the translocation of AZNI2 from ER-Golgi intermediate compartment (ERGIC) to the cytosol. Probably plays a key role in spermatogenesis by regulating the intracellular concentration of polyamines in haploid germ cells. The protein is Ornithine decarboxylase antizyme 3 (Oaz3) of Mus musculus (Mouse).